A 504-amino-acid chain; its full sequence is ATP synthase subunit alpha (504 aa).

169-176 contributes to the ATP binding site; that stretch reads GDRQTGKT.

Belongs to the ATPase alpha/beta chains family. In terms of assembly, F-type ATPases have 2 components, CF(1) - the catalytic core - and CF(0) - the membrane proton channel. CF(1) has five subunits: alpha(3), beta(3), gamma(1), delta(1), epsilon(1). CF(0) has three main subunits: a(1), b(2) and c(9-12). The alpha and beta chains form an alternating ring which encloses part of the gamma chain. CF(1) is attached to CF(0) by a central stalk formed by the gamma and epsilon chains, while a peripheral stalk is formed by the delta and b chains.

Its subcellular location is the cell membrane. It carries out the reaction ATP + H2O + 4 H(+)(in) = ADP + phosphate + 5 H(+)(out). Produces ATP from ADP in the presence of a proton gradient across the membrane. The alpha chain is a regulatory subunit. The polypeptide is ATP synthase subunit alpha (Clostridium botulinum (strain Alaska E43 / Type E3)).